Reading from the N-terminus, the 292-residue chain is NADH-cytochrome b5 reductase 1 (292 aa).

A helical transmembrane segment spans residues 12-32 (ALLVVGTAIFAVLVGAKFLGG). The FAD-binding FR-type domain maps to 43–148 (TEFQNFVLKE…RGPKGAMVYT (106 aa)). Residues 128 to 143 (TTLKIGDNMKVRGPKG) and 154 to 191 (HIGMIAGGTGITPMLQIIKAIIRNRPRNGGNDTTQVDL) contribute to the FAD site.

The protein belongs to the flavoprotein pyridine nucleotide cytochrome reductase family. In terms of assembly, monomer. Component of the 2-(3-amino-3-carboxypropyl)histidine synthase complex composed of dph1, dph2, dph3 and a NADH-dependent reductase, predominantly cbr1. The cofactor is FAD.

The protein localises to the mitochondrion outer membrane. The catalysed reaction is 2 Fe(III)-[cytochrome b5] + NADH = 2 Fe(II)-[cytochrome b5] + NAD(+) + H(+). It catalyses the reaction 2 Fe(3+)-[Dph3] + NADH = 2 Fe(2+)-[Dph3] + NAD(+) + H(+). It participates in protein modification; peptidyl-diphthamide biosynthesis. In terms of biological role, NADH-dependent reductase for dph3 and cytochrome b5. Required for the first step of diphthamide biosynthesis, a post-translational modification of histidine which occurs in elongation factor 2. Dph1 and dph2 transfer a 3-amino-3-carboxypropyl (ACP) group from S-adenosyl-L-methionine (SAM) to a histidine residue, the reaction is assisted by a reduction system comprising dph3 and a NADH-dependent reductase, predominantly cbr1. By reducing dph3, also involved in the formation of the tRNA wobble base modification mcm5s 2U (5-methoxycarbonylmethyl-2-thiouridine), mediated by the elongator complex. The cytochrome b5/NADH cytochrome b5 reductase electron transfer system supports the catalytic activity of several sterol biosynthetic enzymes. This chain is NADH-cytochrome b5 reductase 1 (cbr1), found in Aspergillus oryzae (strain ATCC 42149 / RIB 40) (Yellow koji mold).